Consider the following 312-residue polypeptide: UDP-N-acetylenolpyruvoylglucosamine reductase (312 aa).

In terms of domain architecture, FAD-binding PCMH-type spans 30 to 202 (RVGGPAQWLA…VAAQFQLEPG (173 aa)). The active site involves R181. S232 acts as the Proton donor in catalysis. Residue E302 is part of the active site.

Belongs to the MurB family. FAD serves as cofactor.

It is found in the cytoplasm. The catalysed reaction is UDP-N-acetyl-alpha-D-muramate + NADP(+) = UDP-N-acetyl-3-O-(1-carboxyvinyl)-alpha-D-glucosamine + NADPH + H(+). It functions in the pathway cell wall biogenesis; peptidoglycan biosynthesis. Functionally, cell wall formation. In Synechococcus sp. (strain CC9311), this protein is UDP-N-acetylenolpyruvoylglucosamine reductase.